Consider the following 324-residue polypeptide: Viral cathepsin (324 aa).

A signal peptide spans 1–18; it reads MNKIVLYLLIYVGTFSAA. A propeptide spans 19–113 (activation peptide); it reads YDLLKAPSYF…VVLNRPPDKG (95 aa). Cystine bridges form between C134/C175, C168/C208, and C263/C311. The active site involves C137. N-linked (GlcNAc...) asparagine; by host glycosylation is present at N159. Active-site residues include H270 and N290.

Belongs to the peptidase C1 family. Post-translationally, synthesized as an inactive proenzyme and activated by proteolytic removal of the inhibitory propeptide.

It catalyses the reaction Endopeptidase of broad specificity, hydrolyzing substrates of both cathepsin L and cathepsin B.. In terms of biological role, cysteine protease that plays an essential role in host liquefaction to facilitate horizontal transmission of the virus. May participate in the degradation of foreign protein expressed by the baculovirus system. The polypeptide is Viral cathepsin (Vcath) (Choristoneura fumiferana defective polyhedrosis virus (Cfdef)).